Here is a 132-residue protein sequence, read N- to C-terminus: Small ribosomal subunit protein uS8 (132 aa).

The protein belongs to the universal ribosomal protein uS8 family. Part of the 30S ribosomal subunit. Contacts proteins S5 and S12.

One of the primary rRNA binding proteins, it binds directly to 16S rRNA central domain where it helps coordinate assembly of the platform of the 30S subunit. In Sinorhizobium medicae (strain WSM419) (Ensifer medicae), this protein is Small ribosomal subunit protein uS8.